A 702-amino-acid polypeptide reads, in one-letter code: Glucosidase 2 subunit beta (702 aa).

The first 20 residues, 1–20 (MVSMFSLFLLLIEQSPLVAS), serve as a signal peptide directing secretion. N-linked (GlcNAc...) asparagine glycosylation occurs at N145. The stretch at 163 to 228 (SYREGKEALE…LRGEYFNQLS (66 aa)) forms a coiled coil. N240 and N358 each carry an N-linked (GlcNAc...) asparagine glycan. The interval 435–457 (PKVLPPDAVESEQDTNSDHIGTS) is disordered. The stretch at 478–517 (KDLVSLEKRFRSCESQVSLLENELKQKMDYKKLLDETEDE) forms a coiled coil. Residues N520 and N525 are each glycosylated (N-linked (GlcNAc...) asparagine). An MRH domain is found at 537 to 689 (SYCLDDILDN…DVVGPLGCNK (153 aa)). Disulfide bonds link C539–C552, C646–C675, and C660–C687. Residues N688 and N699 are each glycosylated (N-linked (GlcNAc...) asparagine).

In terms of assembly, heterodimer of a catalytic subunit alpha (ROT2) and a subunit beta (GTB1).

It localises to the endoplasmic reticulum. Its function is as follows. Subunit of glucosidase 2, which cleaves sequentially the 2 innermost alpha-1,3-linked glucose residues from the Glc(2)Man(9)GlcNAc(2) oligosaccharide precursor of immature glycoproteins. Specifically required for the cleavage of the final glucose. The sequence is that of Glucosidase 2 subunit beta (GTB1) from Saccharomyces cerevisiae (strain ATCC 204508 / S288c) (Baker's yeast).